Reading from the N-terminus, the 1182-residue chain is Retrotransposable element SLACS 132 kDa protein (1182 aa).

Disordered stretches follow at residues 77-97, 163-220, 317-339, and 418-478; these read GERS…PRER, DVLD…STDQ, RRKR…ALRL, and RTAR…STAP. Over residues 163 to 174 the composition is skewed to acidic residues; that stretch reads DVLDEEEQDDDL. Positions 420 to 446 are enriched in basic and acidic residues; the sequence is ARREQQQQRGKDNQEEEDRQKKEEKSL. A compositionally biased stretch (polar residues) spans 456 to 475; the sequence is SVRQGGQPSSSQPKRLNRWS. Positions 560–790 constitute a Reverse transcriptase domain; sequence NADVSMEVGR…TGDTGFGTAV (231 aa).

It carries out the reaction DNA(n) + a 2'-deoxyribonucleoside 5'-triphosphate = DNA(n+1) + diphosphate. This Trypanosoma brucei gambiense protein is Retrotransposable element SLACS 132 kDa protein.